The primary structure comprises 373 residues: LIM domain-binding protein 2 (373 aa).

Disordered regions lie at residues 244 to 287 (APPA…KTPA) and 327 to 373 (QYDA…QASQ). The segment covering 263-280 (STSSTSNSSAGNTTNSAG) has biased composition (low complexity). One can recognise an LIM interaction domain (LID) domain in the interval 298–337 (DVMVVGEPTLMGGEFGDEDERLITRLENTQYDAANGMDDE). Over residues 341 to 373 (NNSPALGNNSPWNSKPPATQETKSENAPPQASQ) the composition is skewed to polar residues.

This sequence belongs to the LDB family. Interacts with LHX9. Interacts with SLK; leading to negatively regulate SLK kinase activity. Interacts with LMO4. In terms of assembly, interacts with PITX1. Interacts with LHX3. In terms of processing, ubiquitinated by RLIM/RNF12, leading to its degradation by the proteasome. In terms of tissue distribution, expressed in multiple tissues including heart, brain, liver, kidney, testis, lung and muscle, with expression highest in the brain, trigeminal ganglia, and lung.

Its subcellular location is the nucleus. Transcription cofactor. Binds to the LIM domain of a wide variety of LIM domain-containing transcription factors. In terms of biological role, regulates the transcriptional activity of LIM-containing proteins such as LHX3 or PITX1. This chain is LIM domain-binding protein 2 (Ldb2), found in Mus musculus (Mouse).